The primary structure comprises 472 residues: Guanine nucleotide-binding protein alpha-1 subunit (472 aa).

The N-myristoyl glycine moiety is linked to residue Gly-2. A lipid anchor (S-palmitoyl cysteine) is attached at Cys-3. The 433-residue stretch at 40–472 (NEIKLLLLGA…QQNLKKIGII (433 aa)) folds into the G-alpha domain. The interval 43 to 56 (KLLLLGAGESGKST) is G1 motif. Residues Glu-51, Ser-52, Gly-53, Lys-54, Ser-55, and Thr-56 each contribute to the GTP site. Ser-55 contributes to the Mg(2+) binding site. The interval 127–235 (LDYINASVAG…REIQGQNRRN (109 aa)) is insert; not present in other G-proteins. Positions 162–199 (GRAKAAFDEDGNISNVKSDTDRDAETVTQNEDADRNNS) are disordered. A Glycyl lysine isopeptide (Lys-Gly) (interchain with G-Cter in ubiquitin) cross-link involves residue Lys-165. Positions 292–300 (DILKGRIKT) are G2 motif. The GTP site is built by Leu-294, Thr-300, Gly-322, Asn-388, Lys-389, Asp-391, and Ala-444. Thr-300 is a binding site for Mg(2+). Residues 315–324 (FKVLDAGGQR) form a G3 motif region. Residues 384-391 (ILFLNKID) form a G4 motif region. The segment at 442-447 (TCATDT) is G5 motif.

It belongs to the G-alpha family. G(q) subfamily. G proteins are composed of 3 units; alpha, beta and gamma. The alpha chain contains the guanine nucleotide binding site. In its GDP-bound form, binds to the G protein beta-gamma dimer STE4-STE18. Directly interacts with the beta subunit STE4. Probably forms preactivation complexes with unligated receptors STE2 and STE3. Interacts with FUS3. Pheromone-induced activation of GPA1 increases its association with FUS3. Interacts with SCP160. SCP160 binds specifically to the GTP-bound form of GPA1. Interacts with the phosphatidylinositol 3-kinase (PI3K) subunits VPS15 and VPS34 at the endosome. The GTP-bound form of GPA1 binds directly and selectively to the catalytic subunit VPS34, while the GDP-bound form binds to VPS15, which appears to function as an alternative G protein beta subunit for GPA1. Interacts with regulators of G protein signaling (RGS) proteins MDM1, RAX1, RGS2 and SST2, but SST2 alone binds preferentially to the transition state conformation of GPA1, indicating that it acts as a GAP for this G protein. Mg(2+) serves as cofactor. N-myristoylation by NMT1 is pheromone-stimulated and required for palmitoylation of Cys-3. This lipid modification anchors the protein to membranes. Depalmitoylated by YLR118C/APT1. Post-translationally, monoubiquitination targets the protein for degradation to the vacuole, and polyubiquitination tags the protein for degradation by the proteasome. This may be an additional signaling regulation mechanism.

The protein localises to the cell membrane. It localises to the endosome membrane. Its activity is regulated as follows. Alternates between an inactive form bound to GDP and an active form bound to GTP. Activated by the G protein coupled receptors (GPCRs) STE2 and STE3, which serve as guanine nucleotide-exchange factors (GEFs), and inactivated by SST2, probably acting as a GTPase-activating protein (GAP). Functionally, alpha subunit of the heterotrimeric guanine nucleotide-binding protein (G protein) that mediates mating pheromone signal transduction. Binding of alpha-factor or a-factor to its cognate transmembrane receptor STE2 and STE3, respectively, allows the receptor to serve as a guanine nucleotide exchange factor (GEF) on GPA1. The exchange of GDP for GTP on the G protein alpha subunit alters its interaction with the G protein beta subunit STE4, leading to dissociation of the G protein beta-gamma dimer STE4-STE18. The dissociated subunits activate downstream effectors to activate the mating response pathway and induce changes necessary to produce mating-competent cells. STE4-STE18 activate the downstream pheromone signaling MAP kinase cascade leading to expression of mating-specific genes, inducing cell cycle arrest in G1, promoting polarized cell growth to form mating projections (shmoos), and establishing the changes in plasma membrane, cell wall and nuclear envelope to permit cell-cell fusion (plasmogamy) and fusion of the two haploid nuclei (karyogamy). GPA1 transmits a signal that requires direct binding to the effector enzyme PI3K located at the endosome, promoting increased PI3 production. The intrinsic GTPase activity of GPA1 determines the duration of signaling, and is dramatically accelerated by the RGS protein SST2. In unstimulated cells, GDP-bound GPA1 sequesters the G protein beta-gamma subunit STE4-STE18, preventing it from activating the downstream effectors. Also down-regulates the signal by inhibiting the pheromone-induced accumulation of FUS3 in the nucleus. The polypeptide is Guanine nucleotide-binding protein alpha-1 subunit (GPA1) (Saccharomyces cerevisiae (strain ATCC 204508 / S288c) (Baker's yeast)).